Here is a 374-residue protein sequence, read N- to C-terminus: Ribosomal RNA large subunit methyltransferase G (374 aa).

The protein belongs to the methyltransferase superfamily. RlmG family.

The protein resides in the cytoplasm. The catalysed reaction is guanosine(1835) in 23S rRNA + S-adenosyl-L-methionine = N(2)-methylguanosine(1835) in 23S rRNA + S-adenosyl-L-homocysteine + H(+). In terms of biological role, specifically methylates the guanine in position 1835 (m2G1835) of 23S rRNA. This chain is Ribosomal RNA large subunit methyltransferase G, found in Pseudomonas fluorescens (strain Pf0-1).